The following is an 803-amino-acid chain: Exocyst complex component 6 (803 aa).

Belongs to the SEC15 family. In terms of assembly, the exocyst complex is composed of EXOC1, EXOC2, EXOC3, EXOC4, EXOC5, EXOC6, EXOC7 and EXOC8. Interacts with CNTRL. Interacts with RAB11A in a GTP-dependent manner.

The protein localises to the cytoplasm. It localises to the perinuclear region. It is found in the cell projection. The protein resides in the growth cone. Its subcellular location is the midbody. The protein localises to the midbody ring. Functionally, component of the exocyst complex involved in the docking of exocytic vesicles with fusion sites on the plasma membrane. Together with RAB11A, RAB3IP, RAB8A, PARD3, PRKCI, ANXA2, CDC42 and DNMBP promotes transcytosis of PODXL to the apical membrane initiation sites (AMIS), apical surface formation and lumenogenesis. The polypeptide is Exocyst complex component 6 (EXOC6) (Canis lupus familiaris (Dog)).